A 202-amino-acid chain; its full sequence is Josephin-1 (202 aa).

S15 bears the Phosphoserine mark. The Josephin domain occupies 23-202 (PPQIYHEKQR…EAHQSWRADV (180 aa)). The active-site Nucleophile is the C36. The active-site Proton acceptor is the H139.

As to quaternary structure, interacts with beta-actin/ACTB. Post-translationally, monoubiquitinated. Ubiquitination activates deubiquitination activity in vitro.

Its subcellular location is the cell membrane. The protein resides in the cytoplasm. The catalysed reaction is Thiol-dependent hydrolysis of ester, thioester, amide, peptide and isopeptide bonds formed by the C-terminal Gly of ubiquitin (a 76-residue protein attached to proteins as an intracellular targeting signal).. Deubiquitinates monoubiquitinated probes (in vitro). When ubiquitinated, cleaves 'Lys-63'-linked and 'Lys-48'-linked poly-ubiquitin chains (in vitro), hence may act as a deubiquitinating enzyme. May increase macropinocytosis and suppress clathrin- and caveolae-mediated endocytosis. May enhance membrane dynamics and cell motility independently of its catalytic activity. In Bos taurus (Bovine), this protein is Josephin-1 (JOSD1).